Here is a 344-residue protein sequence, read N- to C-terminus: Anthranilate phosphoribosyltransferase (344 aa).

5-phospho-alpha-D-ribose 1-diphosphate is bound by residues G84, 87 to 88 (GD), S92, 94 to 97 (NIST), 112 to 120 (KHGNRSASG), and S124. An anthranilate-binding site is contributed by G84. S96 contributes to the Mg(2+) binding site. Residue N115 coordinates anthranilate. R170 is a binding site for anthranilate. Mg(2+) is bound by residues D229 and E230.

It belongs to the anthranilate phosphoribosyltransferase family. In terms of assembly, homodimer. The cofactor is Mg(2+).

It carries out the reaction N-(5-phospho-beta-D-ribosyl)anthranilate + diphosphate = 5-phospho-alpha-D-ribose 1-diphosphate + anthranilate. It functions in the pathway amino-acid biosynthesis; L-tryptophan biosynthesis; L-tryptophan from chorismate: step 2/5. In terms of biological role, catalyzes the transfer of the phosphoribosyl group of 5-phosphorylribose-1-pyrophosphate (PRPP) to anthranilate to yield N-(5'-phosphoribosyl)-anthranilate (PRA). The polypeptide is Anthranilate phosphoribosyltransferase (Synechococcus sp. (strain RCC307)).